The chain runs to 305 residues: Oxygen-dependent coproporphyrinogen-III oxidase (305 aa).

A substrate-binding site is contributed by Ser-98. A divalent metal cation is bound by residues His-102 and His-112. His-112 acts as the Proton donor in catalysis. 114-116 (NVR) contacts substrate. His-151 and His-181 together coordinate a divalent metal cation. The important for dimerization stretch occupies residues 246-281 (YVEFNLVYDRGTLFGLQSGGRTESILMSMPPLARWE). 264–266 (GGR) contacts substrate.

It belongs to the aerobic coproporphyrinogen-III oxidase family. As to quaternary structure, homodimer. Requires a divalent metal cation as cofactor.

The protein localises to the cytoplasm. It catalyses the reaction coproporphyrinogen III + O2 + 2 H(+) = protoporphyrinogen IX + 2 CO2 + 2 H2O. It participates in porphyrin-containing compound metabolism; protoporphyrin-IX biosynthesis; protoporphyrinogen-IX from coproporphyrinogen-III (O2 route): step 1/1. Functionally, involved in the heme biosynthesis. Catalyzes the aerobic oxidative decarboxylation of propionate groups of rings A and B of coproporphyrinogen-III to yield the vinyl groups in protoporphyrinogen-IX. The chain is Oxygen-dependent coproporphyrinogen-III oxidase from Vibrio vulnificus (strain CMCP6).